Reading from the N-terminus, the 436-residue chain is Ribulose bisphosphate carboxylase large chain (436 aa).

N104 and T154 together coordinate substrate. K156 functions as the Proton acceptor in the catalytic mechanism. K158 is a substrate binding site. The Mg(2+) site is built by K182, D184, and E185. N6-carboxylysine is present on K182. H275 acts as the Proton acceptor in catalysis. Residues R276, H308, and S360 each contribute to the substrate site.

This sequence belongs to the RuBisCO large chain family. Type I subfamily. As to quaternary structure, heterohexadecamer of 8 large chains and 8 small chains. It depends on Mg(2+) as a cofactor.

The protein localises to the plastid. The protein resides in the chloroplast. The enzyme catalyses 2 (2R)-3-phosphoglycerate + 2 H(+) = D-ribulose 1,5-bisphosphate + CO2 + H2O. It carries out the reaction D-ribulose 1,5-bisphosphate + O2 = 2-phosphoglycolate + (2R)-3-phosphoglycerate + 2 H(+). RuBisCO catalyzes two reactions: the carboxylation of D-ribulose 1,5-bisphosphate, the primary event in carbon dioxide fixation, as well as the oxidative fragmentation of the pentose substrate in the photorespiration process. Both reactions occur simultaneously and in competition at the same active site. This Euglena stellata protein is Ribulose bisphosphate carboxylase large chain.